The sequence spans 346 residues: Enoyl-[acyl-carrier-protein] reductase, mitochondrial (346 aa).

Residues 1–22 constitute a mitochondrion transit peptide; that stretch reads MQKTIRSQALIYRKFGDPLKVL. Tyr-59 (proton donor) is an active-site residue. NADP(+) is bound by residues Asn-131, 157 to 160, 180 to 182, 249 to 252, 274 to 276, and Lys-332; these read NSGV, RNR, YGGM, and VAV.

It belongs to the zinc-containing alcohol dehydrogenase family. Quinone oxidoreductase subfamily. In terms of assembly, homodimer.

Its subcellular location is the mitochondrion. The enzyme catalyses a 2,3-saturated acyl-[ACP] + NADP(+) = a (2E)-enoyl-[ACP] + NADPH + H(+). In terms of biological role, catalyzes the NADPH-dependent reduction of trans-2-enoyl thioesters in mitochondrial fatty acid synthesis (fatty acid synthesis type II). Fatty acid chain elongation in mitochondria uses acyl carrier protein (ACP) as an acyl group carrier, but the enzyme accepts both ACP and CoA thioesters as substrates in vitro. May provide the octanoyl chain used for lipoic acid biosynthesis, regulating protein lipoylation and mitochondrial respiratory activity. Involved in iron homeostasis; affecting Fe-S cluster assembly and ceramide metabolism. Required for proper morphology and bioenergetic functions of mitochondria. Required for maintenance of neurons. This chain is Enoyl-[acyl-carrier-protein] reductase, mitochondrial, found in Caenorhabditis elegans.